The primary structure comprises 513 residues: Zinc finger CCCH-type with G patch domain-containing protein (513 aa).

The segment at 155-178 (PCSYYLEGECRFDETKCRFSHGAL) adopts a C3H1-type zinc-finger fold. Acidic residues predominate over residues 252–261 (DQEEDDELSS). A disordered region spans residues 252 to 282 (DQEEDDELSSEESNSSMNNESSDEAESDMDD). Residues 262–271 (EESNSSMNNE) show a composition bias toward low complexity. The span at 272–282 (SSDEAESDMDD) shows a compositional bias: acidic residues. The 47-residue stretch at 312 to 358 (TRGIGSKLMEKMGYIHGTGLGSDGRGIVTPVSAQILPQGRSLDACME) folds into the G-patch domain. A compositionally biased stretch (polar residues) spans 478–495 (VQMQSHKQELATLQAQER). The tract at residues 478–513 (VQMQSHKQELATLQAQERSLSKEQQTRKSKNKMFEF) is disordered. A compositionally biased stretch (basic and acidic residues) spans 496–513 (SLSKEQQTRKSKNKMFEF).

The protein localises to the nucleus. In terms of biological role, transcription repressor. This is Zinc finger CCCH-type with G patch domain-containing protein from Drosophila erecta (Fruit fly).